We begin with the raw amino-acid sequence, 946 residues long: MSCVAMKYCHESWCLLLSLLLFAIWEPGSGQLRYSVPEEAKHGTFVGRIAQDLGLELTELVPRLFRVASKDRGDLLEVNLQNGILFVNSRIDREELCGRSAECSIHLEVIVDRPLQVFHVEVEVRDINDNPPVFPTTEKNLFVSESRALDPHFSLEGASDADIGTNALLTYRLSPSEYFSLEVPTTDELVKPLQLVLKKPLDRERASELHLVVKATDGGKPELTGTLELHITVLDANDNAPAFDRAIYRVKLVENARNGTVVIRLNASDLDEGSNGQILYSFAADVSPKTEATFHIDSVSGEIKVNGKIDFEETNLWKIQAEAVDKGSPPMFGHCTILIEVLDINDNAPKIIVTSLSLPVQEDAPVGTVIALISVMDPDSTVNGQVTCSLSPHVPFKLVSTFKNYYSLVLDSALDRETTADYKVVVTARDGGSPALWATASVSVEVADVNDNAPAFAQSEYTVFVKENNPPGVHVFTVLAMDADAQENALVSYSLVERRVGERLLSSYVSVHAESGKVFALQPLDHEELELLQFQVTAKDAGVPALGSNVTLQVFVLDENDNAPTLLPHGAVGAGGAVSELVPRSVGSGHVVAKVRAVDADSGYNAWLSYELQFRAGSVRSPFRVGLYTGEISITRALDEADAPRQRLLVLVKDHGEPALTATATVLVSLVESNQAPKASSRVLGPAASESSVVDVNVYLIIAICAVSSLLVLTLVLYTALRCSALPTEVTCGPGKPMLVCSSAVGSWSYSQQRRQRVCSGEGPPKTDLMAFSPSVPPGLGSGDSGVQQEIFENPRQPNPDWRYSASLRAGMHSSVHLEEAGILRAGPGGPDQQWPTVSSATPEPEAGEVSPPVGAGVNSNSWTFKYGPGNPKQSGPGELPDKFIIPGSPAIISIRQEPANNQIDKSDFITFGKKEETKKKKKKKKGNKTQEKKEKGNSTTDNSDQ.

The N-terminal stretch at 1–30 (MSCVAMKYCHESWCLLLSLLLFAIWEPGSG) is a signal peptide. 6 consecutive Cadherin domains span residues 31–134 (QLRY…PPVF), 135–243 (PTTE…APAF), 244–351 (DRAI…APKI), 352–456 (IVTS…APAF), 457–566 (AQSE…APTL), and 582–679 (VPRS…APKA). The Extracellular portion of the chain corresponds to 31 to 697 (QLRYSVPEEA…ASESSVVDVN (667 aa)). An N-linked (GlcNAc...) asparagine glycan is attached at Asn258. An N-linked (GlcNAc...) asparagine glycan is attached at Asn549. The chain crosses the membrane as a helical span at residues 698–718 (VYLIIAICAVSSLLVLTLVLY). Topologically, residues 719 to 946 (TALRCSALPT…GNSTTDNSDQ (228 aa)) are cytoplasmic. 6 PXXP repeats span residues 734 to 737 (PGKP), 774 to 777 (PSVP), 795 to 798 (PRQP), 828 to 831 (PGGP), 869 to 872 (PGNP), and 887 to 890 (PGSP). A 6 X 4 AA repeats of P-X-X-P region spans residues 734 to 890 (PGKPMLVCSS…PDKFIIPGSP (157 aa)). Disordered regions lie at residues 826–852 (AGPG…EVSP) and 865–946 (FKYG…NSDQ). A compositionally biased stretch (basic and acidic residues) spans 905 to 919 (DKSDFITFGKKEETK).

It is found in the cell membrane. In terms of biological role, potential calcium-dependent cell-adhesion protein. May be involved in the establishment and maintenance of specific neuronal connections in the brain. The sequence is that of Protocadherin alpha-10 from Mus musculus (Mouse).